The sequence spans 219 residues: N-(5'-phosphoribosyl)anthranilate isomerase (219 aa).

It belongs to the TrpF family.

It catalyses the reaction N-(5-phospho-beta-D-ribosyl)anthranilate = 1-(2-carboxyphenylamino)-1-deoxy-D-ribulose 5-phosphate. Its pathway is amino-acid biosynthesis; L-tryptophan biosynthesis; L-tryptophan from chorismate: step 3/5. This Bordetella avium (strain 197N) protein is N-(5'-phosphoribosyl)anthranilate isomerase.